The sequence spans 702 residues: Ribosomal RNA large subunit methyltransferase K/L (702 aa).

In terms of domain architecture, THUMP spans 43–154; that stretch reads LVYQSLMWSR…KETASIALDL (112 aa).

It belongs to the methyltransferase superfamily. RlmKL family.

The protein localises to the cytoplasm. The catalysed reaction is guanosine(2445) in 23S rRNA + S-adenosyl-L-methionine = N(2)-methylguanosine(2445) in 23S rRNA + S-adenosyl-L-homocysteine + H(+). It carries out the reaction guanosine(2069) in 23S rRNA + S-adenosyl-L-methionine = N(2)-methylguanosine(2069) in 23S rRNA + S-adenosyl-L-homocysteine + H(+). Its function is as follows. Specifically methylates the guanine in position 2445 (m2G2445) and the guanine in position 2069 (m7G2069) of 23S rRNA. In Escherichia coli O139:H28 (strain E24377A / ETEC), this protein is Ribosomal RNA large subunit methyltransferase K/L.